The sequence spans 132 residues: Phosphoribosyl-AMP cyclohydrolase (132 aa).

A Mg(2+)-binding site is contributed by D79. Zn(2+) is bound at residue C80. Mg(2+)-binding residues include D81 and D83. C100 and C107 together coordinate Zn(2+).

The protein belongs to the PRA-CH family. As to quaternary structure, homodimer. The cofactor is Mg(2+). Zn(2+) is required as a cofactor.

It localises to the cytoplasm. The catalysed reaction is 1-(5-phospho-beta-D-ribosyl)-5'-AMP + H2O = 1-(5-phospho-beta-D-ribosyl)-5-[(5-phospho-beta-D-ribosylamino)methylideneamino]imidazole-4-carboxamide. It functions in the pathway amino-acid biosynthesis; L-histidine biosynthesis; L-histidine from 5-phospho-alpha-D-ribose 1-diphosphate: step 3/9. In terms of biological role, catalyzes the hydrolysis of the adenine ring of phosphoribosyl-AMP. The protein is Phosphoribosyl-AMP cyclohydrolase of Acidovorax sp. (strain JS42).